Consider the following 231-residue polypeptide: Deoxyribose-phosphate aldolase (231 aa).

The Proton donor/acceptor role is filled by D97. Catalysis depends on K162, which acts as the Schiff-base intermediate with acetaldehyde. Residue K191 is the Proton donor/acceptor of the active site.

This sequence belongs to the DeoC/FbaB aldolase family. DeoC type 1 subfamily.

The protein resides in the cytoplasm. The enzyme catalyses 2-deoxy-D-ribose 5-phosphate = D-glyceraldehyde 3-phosphate + acetaldehyde. It participates in carbohydrate degradation; 2-deoxy-D-ribose 1-phosphate degradation; D-glyceraldehyde 3-phosphate and acetaldehyde from 2-deoxy-alpha-D-ribose 1-phosphate: step 2/2. In terms of biological role, catalyzes a reversible aldol reaction between acetaldehyde and D-glyceraldehyde 3-phosphate to generate 2-deoxy-D-ribose 5-phosphate. The polypeptide is Deoxyribose-phosphate aldolase (Caldanaerobacter subterraneus subsp. tengcongensis (strain DSM 15242 / JCM 11007 / NBRC 100824 / MB4) (Thermoanaerobacter tengcongensis)).